Here is a 3242-residue protein sequence, read N- to C-terminus: tRNA nuclease CdiA (3242 aa).

The signal sequence occupies residues 1-32 (MHQPPVRFTYRLLSYLISTIIAGQPLLPAVGA). Residues 36-322 (PQNGAGMDKA…AGGNLSVTGT (287 aa)) form a two-partner system transport domain (TPS) region. The FHA-1 stretch occupies residues 351–1376 (GELTAGQNAM…IVVRTGHLLN (1026 aa)). The interval 1377-1668 (QREGFSATTT…TGQTGISDDW (292 aa)) is receptor-binding domain (RBD). Residues 1668-1852 (WPLPSGNNGY…LSPEDITLHN (185 aa)) form a YP domain region. The interval 1853–1913 (GSVISGNNVQ…DLSAIGDISN (61 aa)) is periplasmic FHA-1 repeat (pFR). An FHA-2 region spans residues 2021 to 2631 (DNSASSTTSQ…TSKYDSKQTS (611 aa)). Residues 2075–2091 (RESKNSRNGRSESHESH) show a composition bias toward basic and acidic residues. Disordered regions lie at residues 2075–2094 (RESK…HAAV), 2310–2333 (GSSK…STIG), and 2439–2481 (TMAS…NAGN). The segment covering 2322 to 2333 (GTTQSQSASTIG) has biased composition (polar residues). Residues 2969–3242 (GVDPSKLTED…IESALKGYGI (274 aa)) form a DUF638-CT domain; not toxic when added to the outside of E.coli, does not interfere with F-pilus mediated conjugation, toxic when expressed intracellularly region. A pre-toxin (PT) domain region spans residues 2972 to 3015 (PSKLTEDQKQTVSTLATLSAGMAGGIASGDVAGAAAGAGAGKNV). The VENN CT cleavage motif motif lies at 3016–3019 (VENN). Residues 3016 to 3097 (VENNALSLVA…KYLSSLHDKY (82 aa)) are toxin import domain; sufficient to import the tRNA nuclease domain of colicin E5 into E.coli, may bind F-pili. The tract at residues 3016-3242 (VENNALSLVA…IESALKGYGI (227 aa)) is CT domain; toxic when added to the outside of E.coli and when expressed intracellularly. An inner membrane translocation domain (IMTD), targets protein to FtsH region spans residues 3020-3141 (ALSLVARGCA…SENDPKQQNE (122 aa)). The segment at 3020–3242 (ALSLVARGCA…IESALKGYGI (223 aa)) is C-terminal effector domain (CT). The tRNase function, does not interfere with F-pilus mediated conjugation stretch occupies residues 3098–3242 (GSGAASNPNI…IESALKGYGI (145 aa)). Residues 3116 to 3146 (KVELGGSGSGTGTPPPSENDPKQQNEKTVDK) form a disordered region. The segment covering 3134–3146 (NDPKQQNEKTVDK) has biased composition (basic and acidic residues). Residues 3137–3238 (KQQNEKTVDK…AINKIESALK (102 aa)) are a coiled coil. Residues Asp-3170, His-3193, and Glu-3196 contribute to the active site.

It in the N-terminal section; belongs to the CdiA toxin family. In terms of assembly, the C-terminal (CT) domain interacts with cognate CdiI but not non-cognate CdiI from D.dadantii strain 3937. CdiA-CT also interacts with CysK; this is blocked upon preincubation with O-acetyl-L-serine. CysK forms a complex with CdiA-CT/CdiI. One CdiA toxin subunit binds to each subunit of the CysK homodimer, and one CdiI immunity protein binds to each toxin subunit; the immune complex is thus a dimer of trimers. The 4 C-terminal residues of CdiA fit into the active site of CysK. A divalent metal cation serves as cofactor.

The protein localises to the secreted. It is found in the target cell membrane. Its subcellular location is the target cell. The protein resides in the target cell cytoplasm. Its function is as follows. Toxic component of a toxin-immunity protein module, which functions as a cellular contact-dependent growth inhibition (CDI) system. CDI modules allow bacteria to communicate with and inhibit the growth of closely related neighboring bacteria in a contact-dependent fashion (target cell counts decrease 100- to 1000-fold). CdiA toxicity is neutralized by its cognate immunity protein CdiI, but not by CdiI from other bacteria. Uses heterotrimeric OmpC and OmpF as target cell outer membrane receptors; receptor function depends on polymorphisms in extracellular loops L4 and L5 of OmpC; interacts with itself and closely related bacteria but also with OmpC from E.cloacae ATCC 13047. Its ability to preferentially bind to 'self' receptors suggests it may also play a role in self-recognition and kin selection. A bamA mutation that decreases its expression about 5-fold is partially resistant to this strain of CdiA, probably due to decreased outer membrane receptor protein assembly. Isolated CdiA-CT is imported in an F-pilus-mediated fashion; CdiA-CT inhibits F-mediated conjugation, probably via its N-terminus (residues 3016-3097), although it is not clear if this is physiologically significant. Gains access to the cytoplasm of target cells by using integral inner membrane protein FtsH. The C-terminal domain (CT) cleaves within tRNA anticodon loops; this activity is inhibited by cognate CdiI. tRNase activity of CdiA-CT is stimulated by CysK, although the extreme C-terminus (residues 3098-3242) has tRNase activity in the absence of CysK. In vivo CDI toxicity requires CysK. CysK stabilizes CdiA-CT, allowing it to bind tRNA substrate; neither CdiA-CT nor CysK bind tRNA alone in vitro. Purified CdiA-CT (residues 3016-3242) inhibits E.coli cell growth when added to cultures alone or in complex with cognate CdiI, growth is inhibited when cognate CdiI is present within the cell but not when a CdiA-CT/CdiI complex is added extracellularly, suggesting CdiA-CT alone but not the CdiA-CT/CdiI complex is imported into the target cell. Functionally, the CdiA protein is thought to be exported from the cell through the central lumen of CdiB, the other half of its two-partner system (TPS). The TPS domain probably remains associated with CdiB while the FHA-1 domain forms an extended filament with the receptor-binding domain (RBD) at its extremity; in the secretion arrested state the C-terminus of the RBD and YP domains form a hairpin-like structure as the FHA-2, PT and CT domains are periplasmic. The YP domain is probably responsible for this arrest at the point where it re-enters the host cell periplasm. Upon binding to a target cell outer membrane receptor (heterotrimeric OmpC-OmpF for this CDI) a signal is transmitted to activate secretion. The filament elongates slightly, the rest of CdiA is secreted and the FHA-2 domain becomes stably associated with the target cell's outer membrane where it facilitates entry of the toxic CT domain into the target cell periplasm. From there the toxic CT domain is cleaved and gains access to the target cell cytoplasm via an inner membrane protein (FtsH for this CDI). This chain is tRNA nuclease CdiA, found in Escherichia coli O6:K15:H31 (strain 536 / UPEC).